Here is a 324-residue protein sequence, read N- to C-terminus: Putative S-adenosyl-L-methionine-dependent methyltransferase MUL_0818 (324 aa).

S-adenosyl-L-methionine-binding positions include aspartate 138 and 167-168 (DL).

Belongs to the UPF0677 family.

Functionally, exhibits S-adenosyl-L-methionine-dependent methyltransferase activity. This chain is Putative S-adenosyl-L-methionine-dependent methyltransferase MUL_0818, found in Mycobacterium ulcerans (strain Agy99).